The chain runs to 485 residues: BTB/POZ domain-containing protein YLR108C (485 aa).

One can recognise a BTB domain in the interval 26–121 (EVFKIRIGQK…LIKEYDYHFT (96 aa)).

The protein resides in the nucleus. The chain is BTB/POZ domain-containing protein YLR108C from Saccharomyces cerevisiae (strain ATCC 204508 / S288c) (Baker's yeast).